Consider the following 188-residue polypeptide: Threonylcarbamoyl-AMP synthase (188 aa).

A YrdC-like domain is found at 3-188 (QLHPSDIKDI…RSGKILRNGQ (186 aa)).

Belongs to the SUA5 family. TsaC subfamily.

It localises to the cytoplasm. It catalyses the reaction L-threonine + hydrogencarbonate + ATP = L-threonylcarbamoyladenylate + diphosphate + H2O. In terms of biological role, required for the formation of a threonylcarbamoyl group on adenosine at position 37 (t(6)A37) in tRNAs that read codons beginning with adenine. Catalyzes the conversion of L-threonine, HCO(3)(-)/CO(2) and ATP to give threonylcarbamoyl-AMP (TC-AMP) as the acyladenylate intermediate, with the release of diphosphate. The protein is Threonylcarbamoyl-AMP synthase of Shewanella baltica (strain OS155 / ATCC BAA-1091).